We begin with the raw amino-acid sequence, 202 residues long: NADH-quinone oxidoreductase subunit C (202 aa).

Belongs to the complex I 30 kDa subunit family. NDH-1 is composed of 14 different subunits. Subunits NuoB, C, D, E, F, and G constitute the peripheral sector of the complex.

Its subcellular location is the cell inner membrane. It carries out the reaction a quinone + NADH + 5 H(+)(in) = a quinol + NAD(+) + 4 H(+)(out). In terms of biological role, NDH-1 shuttles electrons from NADH, via FMN and iron-sulfur (Fe-S) centers, to quinones in the respiratory chain. The immediate electron acceptor for the enzyme in this species is believed to be ubiquinone. Couples the redox reaction to proton translocation (for every two electrons transferred, four hydrogen ions are translocated across the cytoplasmic membrane), and thus conserves the redox energy in a proton gradient. The chain is NADH-quinone oxidoreductase subunit C from Acidovorax sp. (strain JS42).